Reading from the N-terminus, the 511-residue chain is Ribonuclease Y (511 aa).

The helical transmembrane segment at 3–23 threads the bilayer; the sequence is VGILIGIIILGVVGFIQYTLI. Residues 201 to 286 form the KH domain; the sequence is TVHVVALPND…EMVERAIKDV (86 aa). The HD domain occupies 327–420; the sequence is VLKHSIEVSY…VQAADAISAA (94 aa).

The protein belongs to the RNase Y family.

The protein resides in the cell membrane. In terms of biological role, endoribonuclease that initiates mRNA decay. This is Ribonuclease Y from Clostridium perfringens (strain SM101 / Type A).